The primary structure comprises 98 residues: Large ribosomal subunit protein uL23 (98 aa).

Belongs to the universal ribosomal protein uL23 family. In terms of assembly, part of the 50S ribosomal subunit. Contacts protein L29, and trigger factor when it is bound to the ribosome.

Functionally, one of the early assembly proteins it binds 23S rRNA. One of the proteins that surrounds the polypeptide exit tunnel on the outside of the ribosome. Forms the main docking site for trigger factor binding to the ribosome. This is Large ribosomal subunit protein uL23 from Borrelia garinii subsp. bavariensis (strain ATCC BAA-2496 / DSM 23469 / PBi) (Borreliella bavariensis).